Here is a 309-residue protein sequence, read N- to C-terminus: Homoserine O-acetyltransferase (309 aa).

C142 acts as the Acyl-thioester intermediate in catalysis. Substrate contacts are provided by K163 and S192. H235 functions as the Proton acceptor in the catalytic mechanism. E237 is a catalytic residue. R249 contributes to the substrate binding site.

The protein belongs to the MetA family.

It is found in the cytoplasm. It catalyses the reaction L-homoserine + acetyl-CoA = O-acetyl-L-homoserine + CoA. It functions in the pathway amino-acid biosynthesis; L-methionine biosynthesis via de novo pathway; O-acetyl-L-homoserine from L-homoserine: step 1/1. Functionally, transfers an acetyl group from acetyl-CoA to L-homoserine, forming acetyl-L-homoserine. The protein is Homoserine O-acetyltransferase of Methanomethylophilus alvi (strain Mx1201).